We begin with the raw amino-acid sequence, 544 residues long: Cytochrome P450 monooxygenase cle2 (544 aa).

Residues 19–39 (LGLLIGLSLILSITWTAYTIL) form a helical membrane-spanning segment. A disordered region spans residues 273–305 (RTQQVEQSIEKNTKNEKKEDEDEDQNEDEETPG). A compositionally biased stretch (basic and acidic residues) spans 280–290 (SIEKNTKNEKK). Residues 291–304 (EDEDEDQNEDEETP) are compositionally biased toward acidic residues. C478 lines the heme pocket.

Belongs to the cytochrome P450 family. Heme serves as cofactor.

It is found in the membrane. It participates in secondary metabolite biosynthesis; terpenoid biosynthesis. Cytochrome P450 monooxygenase; part of the cluster A that mediates the biosynthesis of chevalone E and its oxidized derivatives that possess a unique five-membered lactone ring and can synergistically enhance the cytotoxicity of doxorubicin (DOX) in breast cancer cells. Within the pathway, cle2 is involved in hydroxylation of the chavalone E scaffold at position C-20 and contributes with cle4 to the production of seven oxidation derivatives. The molecular scaffold is commonly biosynthesized by a series of enzymes including the non-reducing polyketide synthase (NR-PKS) cle1 that produces the alpha-pyrone triacetic acid lactone (TAL); The membrane-bound prenyltransferase cle5 that accepts TAL as its substrate to perform a C-3 geranylgeranylation reaction, in which the pathway-dedicated GGPS cle6 is required to provide GGPP, the other substrate of cle5; the FAD-dependent monooxygenase Cle3 that forms an (S)-epoxide ring at the terminal olefin of the geranylgeranyl group; and the terpene cyclase Cle7 that catalyzes the cyclization of the prenyl group that yields the pentacyclic pathway intermediate chevalone E. Chevalone E can derivatize into seven new oxidized analogs by the cytochrome P450 monooxygenases cle2 (acting at C-20) and cle4 (acting at C-11 and C-12). This is Cytochrome P450 monooxygenase cle2 from Aspergillus versicolor.